The following is a 274-amino-acid chain: Large ribosomal subunit protein uL2cz/uL2cy (274 aa).

The disordered stretch occupies residues 224–252; the sequence is NPVDHPHGGGEGRAPIGRKKPVTPWGYPA.

Belongs to the universal ribosomal protein uL2 family. Part of the 50S ribosomal subunit.

It is found in the plastid. Its subcellular location is the chloroplast. This Capsella bursa-pastoris (Shepherd's purse) protein is Large ribosomal subunit protein uL2cz/uL2cy (rpl2-A).